Consider the following 407-residue polypeptide: Carbamoyl phosphate synthase small chain (407 aa).

The tract at residues 1 to 203 (MSQNESGTIA…EPCGEYEGKE (203 aa)) is CPSase. Residues Ser-61, Gly-255, and Gly-257 each coordinate L-glutamine. Positions 207–405 (TVAAVDLGIK…CELMKNNSKE (199 aa)) constitute a Glutamine amidotransferase type-1 domain. Catalysis depends on Cys-283, which acts as the Nucleophile. Residues Phe-284, Gln-287, Asn-325, Gly-327, and Phe-328 each coordinate L-glutamine. Catalysis depends on residues His-378 and Glu-380.

Belongs to the CarA family. Composed of two chains; the small (or glutamine) chain promotes the hydrolysis of glutamine to ammonia, which is used by the large (or ammonia) chain to synthesize carbamoyl phosphate. Tetramer of heterodimers (alpha,beta)4.

The catalysed reaction is hydrogencarbonate + L-glutamine + 2 ATP + H2O = carbamoyl phosphate + L-glutamate + 2 ADP + phosphate + 2 H(+). It catalyses the reaction L-glutamine + H2O = L-glutamate + NH4(+). The protein operates within amino-acid biosynthesis; L-arginine biosynthesis; carbamoyl phosphate from bicarbonate: step 1/1. Its pathway is pyrimidine metabolism; UMP biosynthesis via de novo pathway; (S)-dihydroorotate from bicarbonate: step 1/3. Functionally, small subunit of the glutamine-dependent carbamoyl phosphate synthetase (CPSase). CPSase catalyzes the formation of carbamoyl phosphate from the ammonia moiety of glutamine, carbonate, and phosphate donated by ATP, constituting the first step of 2 biosynthetic pathways, one leading to arginine and/or urea and the other to pyrimidine nucleotides. The small subunit (glutamine amidotransferase) binds and cleaves glutamine to supply the large subunit with the substrate ammonia. The protein is Carbamoyl phosphate synthase small chain of Bifidobacterium longum (strain NCC 2705).